We begin with the raw amino-acid sequence, 532 residues long: Transcriptional regulatory protein RtcR (532 aa).

Positions 186-424 constitute a Sigma-54 factor interaction domain; that stretch reads IATRNPHFNR…LSASVTRMAT (239 aa). ATP contacts are provided by residues 215–222 and 281–290; these read GPTGAGKS and ANGGMLFLDE. Positions 485–504 form a DNA-binding region, H-T-H motif; sequence KSLSAAGRQLFDVSRQGKAS.

Transcriptional repressor of the rtcAB genes. Interacts with sigma-54. The protein is Transcriptional regulatory protein RtcR (rtcR) of Escherichia coli (strain K12).